The following is a 215-amino-acid chain: 3,4-dihydroxy-2-butanone 4-phosphate synthase (215 aa).

D-ribulose 5-phosphate contacts are provided by residues 38–39 (RE), aspartate 43, 151–155 (RRGHT), and glutamate 175. Mg(2+) is bound at residue glutamate 39. Histidine 154 contacts Mg(2+).

Belongs to the DHBP synthase family. Homodimer. Mg(2+) is required as a cofactor. It depends on Mn(2+) as a cofactor.

It carries out the reaction D-ribulose 5-phosphate = (2S)-2-hydroxy-3-oxobutyl phosphate + formate + H(+). Its pathway is cofactor biosynthesis; riboflavin biosynthesis; 2-hydroxy-3-oxobutyl phosphate from D-ribulose 5-phosphate: step 1/1. Catalyzes the conversion of D-ribulose 5-phosphate to formate and 3,4-dihydroxy-2-butanone 4-phosphate. This chain is 3,4-dihydroxy-2-butanone 4-phosphate synthase, found in Haemophilus influenzae (strain PittGG).